Here is a 127-residue protein sequence, read N- to C-terminus: MEDQPPTEIQISVETRYLPEQSSPEQEHFAFAYQITMQNNGPQTAQLLSRHWIITDAEGHVQEVKGPGVVGEQPTLQPGQRFRYTSGSVLSTPVGSMHGTFEWVSDTGESFVVPIPAFRLAAATVFH.

An ApaG domain is found at 3–127 (DQPPTEIQIS…FRLAAATVFH (125 aa)).

The protein is Protein ApaG of Acidithiobacillus ferrooxidans (strain ATCC 23270 / DSM 14882 / CIP 104768 / NCIMB 8455) (Ferrobacillus ferrooxidans (strain ATCC 23270)).